The chain runs to 434 residues: Protein POLLENLESS 3 (434 aa).

The disordered stretch occupies residues 13-47 (VYYTPPPARTSDHVAAMPMTERRRPPYSCSSSSER). The Nuclear localization signal 1 signature appears at 34-37 (RRRP). TPR repeat units follow at residues 95 to 131 (DSALKDMAVVMKQLGRSDEGIEAIKSFRYLCSFESQD), 133 to 164 (IDNLLLELYKKSGRIEEEAVLLEHKLQTLEQG), 191 to 224 (ARILGNLGWVHLQLHNYGIAEQHYRRALGLERDK), and 241 to 274 (PEAKSLLDDVRDSPAESECGDEPFAKSYDRAVEM). The stretch at 142 to 166 (KKSGRIEEEAVLLEHKLQTLEQGMG) forms a coiled coil. Positions 309-329 (TANKNYSDVSSSPASVRPNSA) are disordered. The segment covering 310 to 326 (ANKNYSDVSSSPASVRP) has biased composition (polar residues). Residues 377-380 (KRKK) carry the Nuclear localization signal 2 motif. Residues 393-408 (VKDTADGPKSESKKSW) show a composition bias toward basic and acidic residues. The disordered stretch occupies residues 393 to 434 (VKDTADGPKSESKKSWADIAEEEEAEEEEEERLQGELKTAEM). Residues 408–434 (WADIAEEEEAEEEEEERLQGELKTAEM) adopt a coiled-coil conformation. A compositionally biased stretch (acidic residues) spans 411–423 (IAEEEEAEEEEEE). Residues 424 to 434 (RLQGELKTAEM) show a composition bias toward basic and acidic residues.

It belongs to the MS5 protein family. As to expression, expressed at low levels mostly in floral organs during meiosis. Also barely detectable in leaves, stems and roots.

It localises to the nucleus. Its function is as follows. Essential for male fertility, especially for microspore and pollen grain production. Involved in the regulation of cell division after male meiosis I and II to facilitate exit from meiosis and transition to G1. In Arabidopsis thaliana (Mouse-ear cress), this protein is Protein POLLENLESS 3.